The primary structure comprises 298 residues: Rhodopsin (298 aa).

The Extracellular segment spans residues 1-15 (IHLHWYEYPPMNPMM). Residues 16 to 40 (YPLLLIFMLFTGILCLAGNFVTIWV) traverse the membrane as a helical segment. Residues 41-52 (FMNTKSLRTPAN) are Cytoplasmic-facing. Residues 53–75 (LLVVNLAMSDFLMMFTMFPPMMV) traverse the membrane as a helical segment. Residues 76-89 (TCYYHTWTLGPTFC) lie on the Extracellular side of the membrane. The cysteines at positions 89 and 166 are disulfide-linked. A helical transmembrane segment spans residues 90–112 (QVYAFLGNLCGCASIWTMVFITF). The short motif at 113-115 (DRY) is the 'Ionic lock' involved in activated form stabilization element. The Cytoplasmic segment spans residues 113–131 (DRYNVIVKGVAGEPLSTKK). A helical membrane pass occupies residues 132-152 (ASLWILTIWVLSTTWCMAPFF). Topologically, residues 153–179 (GWNHYVPEGNLTGCGTDYLSEDILSRS) are extracellular. Residue asparagine 162 is glycosylated (N-linked (GlcNAc...) asparagine). Residues 180-201 (YLYVYSTWVYFLPLAITIYCYV) form a helical membrane-spanning segment. Residues 202 to 242 (FIIKAVAAHEKGMRDQAKKMGIKSLRNEEAQKTSAECRLAK) are Cytoplasmic-facing. Residues 243 to 264 (IAMTTVALWFIAWTPYLLINWV) form a helical membrane-spanning segment. The Extracellular segment spans residues 265–275 (GMFARSYLSPV). A helical membrane pass occupies residues 276–297 (YTIWGYVFAKANAVYNPIVYAI). An N6-(retinylidene)lysine modification is found at lysine 285.

It belongs to the G-protein coupled receptor 1 family. Opsin subfamily. As to quaternary structure, homodimer. Interacts with GNAQ. In terms of processing, contains one covalently linked retinal chromophore.

It is found in the cell projection. Its subcellular location is the rhabdomere membrane. Functionally, photoreceptor required for image-forming vision at low light intensity. Can use both retinal and 3-dehydroretinal as visual pigment. Light-induced isomerization of 11-cis to all-trans retinal triggers a conformational change that activates signaling via G-proteins. Signaling via GNAQ probably mediates the activation of phospholipase C. In Procambarus orcinus (Crayfish), this protein is Rhodopsin (RHO).